The sequence spans 280 residues: Octanoyl-[GcvH]:protein N-octanoyltransferase (280 aa).

One can recognise a BPL/LPL catalytic domain in the interval 40-245 (QERGAVLRAW…VLSTVSLLQN (206 aa)). The active-site Acyl-thioester intermediate is Cys144.

The protein belongs to the octanoyltransferase LipL family.

It catalyses the reaction N(6)-octanoyl-L-lysyl-[glycine-cleavage complex H protein] + L-lysyl-[lipoyl-carrier protein] = N(6)-octanoyl-L-lysyl-[lipoyl-carrier protein] + L-lysyl-[glycine-cleavage complex H protein]. The protein operates within protein modification; protein lipoylation via endogenous pathway; protein N(6)-(lipoyl)lysine from octanoyl-[acyl-carrier-protein]. Functionally, catalyzes the amidotransfer (transamidation) of the octanoyl moiety from octanoyl-GcvH to the lipoyl domain of the E2 subunit of lipoate-dependent enzymes. The polypeptide is Octanoyl-[GcvH]:protein N-octanoyltransferase (Exiguobacterium sp. (strain ATCC BAA-1283 / AT1b)).